A 100-amino-acid polypeptide reads, in one-letter code: Small ribosomal subunit protein uS14c (100 aa).

It belongs to the universal ribosomal protein uS14 family. As to quaternary structure, part of the 30S ribosomal subunit.

The protein localises to the plastid. Functionally, binds 16S rRNA, required for the assembly of 30S particles. The sequence is that of Small ribosomal subunit protein uS14c (rps14) from Cuscuta gronovii (Common dodder).